The sequence spans 376 residues: Lipid-A-disaccharide synthase (376 aa).

This sequence belongs to the LpxB family.

The enzyme catalyses a lipid X + a UDP-2-N,3-O-bis[(3R)-3-hydroxyacyl]-alpha-D-glucosamine = a lipid A disaccharide + UDP + H(+). It functions in the pathway bacterial outer membrane biogenesis; LPS lipid A biosynthesis. Functionally, condensation of UDP-2,3-diacylglucosamine and 2,3-diacylglucosamine-1-phosphate to form lipid A disaccharide, a precursor of lipid A, a phosphorylated glycolipid that anchors the lipopolysaccharide to the outer membrane of the cell. The sequence is that of Lipid-A-disaccharide synthase from Coxiella burnetii (strain CbuK_Q154) (Coxiella burnetii (strain Q154)).